The sequence spans 89 residues: Small ribosomal subunit protein uS15 (89 aa).

This sequence belongs to the universal ribosomal protein uS15 family. In terms of assembly, part of the 30S ribosomal subunit. Forms a bridge to the 50S subunit in the 70S ribosome, contacting the 23S rRNA.

Functionally, one of the primary rRNA binding proteins, it binds directly to 16S rRNA where it helps nucleate assembly of the platform of the 30S subunit by binding and bridging several RNA helices of the 16S rRNA. Forms an intersubunit bridge (bridge B4) with the 23S rRNA of the 50S subunit in the ribosome. The polypeptide is Small ribosomal subunit protein uS15 (Klebsiella pneumoniae subsp. pneumoniae (strain ATCC 700721 / MGH 78578)).